Here is a 131-residue protein sequence, read N- to C-terminus: SPbeta prophage-derived uncharacterized protein YomZ (131 aa).

This chain is SPbeta prophage-derived uncharacterized protein YomZ (yomZ), found in Bacillus subtilis (strain 168).